A 233-amino-acid chain; its full sequence is Sugar fermentation stimulation protein homolog (233 aa).

It belongs to the SfsA family.

This is Sugar fermentation stimulation protein homolog from Teredinibacter turnerae (strain ATCC 39867 / T7901).